A 243-amino-acid polypeptide reads, in one-letter code: Segregation and condensation protein A (243 aa).

This sequence belongs to the ScpA family. Component of a cohesin-like complex composed of ScpA, ScpB and the Smc homodimer, in which ScpA and ScpB bind to the head domain of Smc. The presence of the three proteins is required for the association of the complex with DNA.

It is found in the cytoplasm. Participates in chromosomal partition during cell division. May act via the formation of a condensin-like complex containing Smc and ScpB that pull DNA away from mid-cell into both cell halves. The protein is Segregation and condensation protein A of Staphylococcus aureus (strain NCTC 8325 / PS 47).